A 382-amino-acid chain; its full sequence is Putative acetyl-CoA C-acetyltransferase VraB (382 aa).

Cysteine 86 functions as the Acyl-thioester intermediate in the catalytic mechanism. The Proton acceptor role is filled by histidine 338.

The protein belongs to the thiolase-like superfamily. Thiolase family.

The polypeptide is Putative acetyl-CoA C-acetyltransferase VraB (vraB) (Staphylococcus epidermidis (strain ATCC 35984 / DSM 28319 / BCRC 17069 / CCUG 31568 / BM 3577 / RP62A)).